Here is a 247-residue protein sequence, read N- to C-terminus: Neurotrophic factor BDNF precursor form (247 aa).

Positions 1–18 are cleaved as a signal peptide; the sequence is MTILFLTMVISYFGCMKA. Residues 19–128 constitute a propeptide that is removed on maturation; the sequence is APMKEANIRG…AANMSMRVRR (110 aa). The N-linked (GlcNAc...) asparagine glycan is linked to Asn121. Cystine bridges form between Cys141–Cys208, Cys186–Cys237, and Cys196–Cys239.

It belongs to the NGF-beta family. In terms of assembly, monomers and homodimers. Binds to NTRK2/TRKB. Can form heterodimers with other neurotrophin family members, such as NTF3 and NTF4 (in vitro), but the physiological relevance of this is not clear. BDNF precursor form: interacts with the heterodimer formed by NGFR and SORCS2. N-glycosylated and glycosulfated, contrary to mature BDNF. Post-translationally, mature BDNF is produced by proteolytic removal of the propeptide, catalyzed by a FURIN family member. In addition, the precursor form is proteolytically cleaved within the propeptide, but this is not an obligatory intermediate for the production of mature BDNF. Can be converted into mature BDNF by plasmin (PLG). In terms of tissue distribution, detected in blood plasma and in saliva (at protein level). Brain. Highly expressed in hippocampus, amygdala, cerebral cortex and cerebellum. Also expressed in heart, lung, skeletal muscle, testis, prostate and placenta.

The protein resides in the secreted. Its function is as follows. Important signaling molecule that activates signaling cascades downstream of NTRK2. During development, promotes the survival and differentiation of selected neuronal populations of the peripheral and central nervous systems. Participates in axonal growth, pathfinding and in the modulation of dendritic growth and morphology. Major regulator of synaptic transmission and plasticity at adult synapses in many regions of the CNS. The versatility of BDNF is emphasized by its contribution to a range of adaptive neuronal responses including long-term potentiation (LTP), long-term depression (LTD), certain forms of short-term synaptic plasticity, as well as homeostatic regulation of intrinsic neuronal excitability. In terms of biological role, important signaling molecule that activates signaling cascades downstream of NTRK2. Activates signaling cascades via the heterodimeric receptor formed by NGFR and SORCS2. Signaling via NGFR and SORCS2 plays a role in synaptic plasticity and long-term depression (LTD). Binding to NGFR and SORCS2 promotes neuronal apoptosis. Promotes neuronal growth cone collapse. This is Neurotrophic factor BDNF precursor form from Homo sapiens (Human).